Consider the following 391-residue polypeptide: Oxytocin receptor (391 aa).

At 1 to 38 the chain is on the extracellular side; the sequence is MEGAFAANWSAEAVNGSAAPPGTEGNRTAGPPQRNEAL. 3 N-linked (GlcNAc...) asparagine glycosylation sites follow: asparagine 8, asparagine 15, and asparagine 26. A helical transmembrane segment spans residues 39 to 63; that stretch reads ARVEVAVLSLILFLALSGNACVLLA. Topologically, residues 64-74 are cytoplasmic; the sequence is LRTTRHKHSRL. A helical transmembrane segment spans residues 75 to 97; the sequence is FFFMKHLSIADLAVAVFQVLPQL. The Extracellular segment spans residues 98–113; the sequence is LWDITFRFYGPDLLCR. A disulfide bond links cysteine 112 and cysteine 187. The helical transmembrane segment at 114 to 135 threads the bilayer; sequence LVKYLQVVGMFASTYLLLLMSL. Residues 136-154 are Cytoplasmic-facing; sequence DRCLAICQPLRSLRRRTDR. Residues 155–175 form a helical membrane-spanning segment; that stretch reads LAVLATWLGCLVASAPQVHIF. The Extracellular segment spans residues 176–202; it reads SLREVADGVFDCWAVFIQPWGPKAYIT. A helical transmembrane segment spans residues 203 to 225; that stretch reads WITLAVYIVPVIVLAACYGLISF. Residues 226–277 lie on the Cytoplasmic side of the membrane; that stretch reads KIWQNLRLKTEAAAAEASAGAEGAAADCAGRAALARVSNVKLISKAKIRTVK. The helical transmembrane segment at 278 to 296 threads the bilayer; it reads MTFIVVLAFIVCWTPFFFK. Residues 297–311 are Extracellular-facing; that stretch reads QMWSVWDADAPKEAS. Residues 312–334 form a helical membrane-spanning segment; it reads AFIIAMLLASLNSCCNPWIYMLF. Over 335-391 the chain is Cytoplasmic; it reads TGHLFQDLVQRFLCCSFRRLKGSQLGETSVTKKIHSYTFVLSRHSSSQRSCSQPSTV. At serine 370 the chain carries Phosphoserine.

This sequence belongs to the G-protein coupled receptor 1 family. Vasopressin/oxytocin receptor subfamily.

It is found in the cell membrane. In terms of biological role, receptor for oxytocin. The activity of this receptor is mediated by G proteins which activate a phosphatidylinositol-calcium second messenger system. The sequence is that of Oxytocin receptor (OXTR) from Ovis aries (Sheep).